The sequence spans 145 residues: Selenoprotein M (145 aa).

The first 23 residues, 1–23 (MSLLLPPLALLLLLAALVAPATA), serve as a signal peptide directing secretion. Catalysis depends on nucleophile residues C45 and U48. Positions 45–48 (CGGU) form a cross-link, cysteinyl-selenocysteine (Cys-Sec). A non-standard amino acid (selenocysteine) is located at residue U48.

Belongs to the selenoprotein M/F family. As to expression, widely expressed.

It localises to the cytoplasm. The protein resides in the perinuclear region. The protein localises to the endoplasmic reticulum. It is found in the golgi apparatus. Its function is as follows. May function as a thiol-disulfide oxidoreductase that participates in disulfide bond formation. The protein is Selenoprotein M of Homo sapiens (Human).